A 460-amino-acid chain; its full sequence is MLKILIPTLFLLPTTWLTSSKWLWPTALTQSMLIALGSITWLNNTTDTGWTALNSYIGTDPLSTPLLVLSCWLLPLMLLASQNHLSSEPMNRQRMYITLLATLQLFLILAFGATEMIMFYVMFEATLIPTLLVITRWGNHTERLNAGTYFLFYTLAGSLPLLVALLMLQNNTGTLSLLIIPYAKPLLLMPFGSKIWWAACMIAFLVKMPLYGMHLWLPKAHVEAPVAGSMVLAAVLLKLGGYGMMRLMIVLDPLSKEMVYPFIVLALWGVIITGSICLRQTDLKSLIAYSSVSHMGLVAGGILIQTPWGFTGALILMIAHGLASSALFCLANTNYERTHSRTMLLARGLQIALPLMTTWWFIASLANLALPPLPNLMGELMILTSLFNWSAWTLILTGIGTLITAAYSLYMFLMSQRGPLPQHMLALPPSYTREHLLMALHLIPLLLIILKPALLWGWFA.

A run of 13 helical transmembrane segments spans residues 22 to 42, 61 to 81, 94 to 113, 117 to 139, 148 to 168, 195 to 217, 225 to 245, 258 to 278, 285 to 304, 308 to 330, 351 to 371, 394 to 414, and 436 to 456; these read WLWP…ITWL, PLST…LLAS, RMYI…AFGA, IMFY…RWGN, TYFL…LLML, IWWA…HLWL, PVAG…YGMM, MVYP…SICL, SLIA…GILI, WGFT…LFCL, IALP…LALP, LILT…MFLM, and LLMA…ALLW.

This sequence belongs to the complex I subunit 4 family.

It is found in the mitochondrion membrane. It catalyses the reaction a ubiquinone + NADH + 5 H(+)(in) = a ubiquinol + NAD(+) + 4 H(+)(out). In terms of biological role, core subunit of the mitochondrial membrane respiratory chain NADH dehydrogenase (Complex I) that is believed to belong to the minimal assembly required for catalysis. Complex I functions in the transfer of electrons from NADH to the respiratory chain. The immediate electron acceptor for the enzyme is believed to be ubiquinone. This Gadus morhua (Atlantic cod) protein is NADH-ubiquinone oxidoreductase chain 4 (MT-ND4).